The primary structure comprises 358 residues: MLSIIGFIITISILVFIHEFGHYCIARYFNVKVEEFSIGFGKALIGITDKKGVRWKICLIPLGGYVKIYGYDRSLMDKTKEVNEKVAFDAKSCLERFLIVAAGPLINYLLAIIIFAGFYCYFGKTEIPPIIGNVVASSPAERADLRAGDKIVKVNDKSVKDFGDVQREILINGFSSSTLTIERKSEEFIVNIMPQEIIISPPEEKQVNKKTLRIGIIAKNESIHTKIGILGGLWEAINTTIDMSALTLNAISQMIVGKRSFDEIGGPIAIAKESGKSIAGGTQMYLLFIAMLSVNLGLLNLLPIPVLDGGHLVFILYEAITGKLPHPKTKNILLQLGAIIIIFLIIIAVSNDIQNLFS.

A Zn(2+)-binding site is contributed by His-18. Residue Glu-19 is part of the active site. His-22 is a Zn(2+) binding site. 4 helical membrane-spanning segments follow: residues 52–71 (GVRW…IYGY), 97–119 (FLIV…AGFY), 285–307 (YLLF…IPVL), and 332–351 (ILLQ…AVSN). The 85-residue stretch at 102-186 (AGPLINYLLA…STLTIERKSE (85 aa)) folds into the PDZ domain.

The protein belongs to the peptidase M50B family. The cofactor is Zn(2+).

It is found in the cell inner membrane. The sequence is that of Putative zinc metalloprotease RC0203 from Rickettsia conorii (strain ATCC VR-613 / Malish 7).